Consider the following 110-residue polypeptide: MSETRAVLRGVRLSVDKGRLVADLIRGKKVDQALNILTFTQKKAAVIIKKVLESAIANAEHNDGADIDELKVKTIFVEQGTTLKRFTARAKGRGNRISKPTCHVYVTVGN.

Belongs to the universal ribosomal protein uL22 family. As to quaternary structure, part of the 50S ribosomal subunit.

Functionally, this protein binds specifically to 23S rRNA; its binding is stimulated by other ribosomal proteins, e.g. L4, L17, and L20. It is important during the early stages of 50S assembly. It makes multiple contacts with different domains of the 23S rRNA in the assembled 50S subunit and ribosome. In terms of biological role, the globular domain of the protein is located near the polypeptide exit tunnel on the outside of the subunit, while an extended beta-hairpin is found that lines the wall of the exit tunnel in the center of the 70S ribosome. The chain is Large ribosomal subunit protein uL22 from Delftia acidovorans (strain DSM 14801 / SPH-1).